Consider the following 579-residue polypeptide: CTP synthase (579 aa).

The interval 1–281 is amidoligase domain; the sequence is MPALRKHPQT…DAYVVRRLNL (281 aa). Residue Ser23 coordinates CTP. Residue Ser23 coordinates UTP. Residues 24 to 29 and Asp81 each bind ATP; that span reads SLGKGL. Residues Asp81 and Glu155 each coordinate Mg(2+). Residues 162 to 164, 202 to 207, and Lys238 each bind CTP; these read DIE and KTKPTQ. UTP-binding positions include 202–207 and Lys238; that span reads KTKPTQ. Residues 306-554 enclose the Glutamine amidotransferase type-1 domain; that stretch reads RIALVGKYID…IGAALDYKAA (249 aa). Gly369 contacts L-glutamine. The active-site Nucleophile; for glutamine hydrolysis is Cys396. Residues 397–400, Glu419, and Arg480 each bind L-glutamine; that span reads LGLQ. Residues His527 and Glu529 contribute to the active site.

This sequence belongs to the CTP synthase family. Homotetramer.

It catalyses the reaction UTP + L-glutamine + ATP + H2O = CTP + L-glutamate + ADP + phosphate + 2 H(+). The catalysed reaction is L-glutamine + H2O = L-glutamate + NH4(+). It carries out the reaction UTP + NH4(+) + ATP = CTP + ADP + phosphate + 2 H(+). It functions in the pathway pyrimidine metabolism; CTP biosynthesis via de novo pathway; CTP from UDP: step 2/2. With respect to regulation, allosterically activated by GTP, when glutamine is the substrate; GTP has no effect on the reaction when ammonia is the substrate. The allosteric effector GTP functions by stabilizing the protein conformation that binds the tetrahedral intermediate(s) formed during glutamine hydrolysis. Inhibited by the product CTP, via allosteric rather than competitive inhibition. In terms of biological role, catalyzes the ATP-dependent amination of UTP to CTP with either L-glutamine or ammonia as the source of nitrogen. Regulates intracellular CTP levels through interactions with the four ribonucleotide triphosphates. In Mycobacterium sp. (strain KMS), this protein is CTP synthase.